The sequence spans 174 residues: Crossover junction endodeoxyribonuclease RuvC (174 aa).

Active-site residues include aspartate 8, glutamate 67, and aspartate 139. Positions 8, 67, and 139 each coordinate Mg(2+).

It belongs to the RuvC family. Homodimer which binds Holliday junction (HJ) DNA. The HJ becomes 2-fold symmetrical on binding to RuvC with unstacked arms; it has a different conformation from HJ DNA in complex with RuvA. In the full resolvosome a probable DNA-RuvA(4)-RuvB(12)-RuvC(2) complex forms which resolves the HJ. The cofactor is Mg(2+).

The protein resides in the cytoplasm. The enzyme catalyses Endonucleolytic cleavage at a junction such as a reciprocal single-stranded crossover between two homologous DNA duplexes (Holliday junction).. In terms of biological role, the RuvA-RuvB-RuvC complex processes Holliday junction (HJ) DNA during genetic recombination and DNA repair. Endonuclease that resolves HJ intermediates. Cleaves cruciform DNA by making single-stranded nicks across the HJ at symmetrical positions within the homologous arms, yielding a 5'-phosphate and a 3'-hydroxyl group; requires a central core of homology in the junction. The consensus cleavage sequence is 5'-(A/T)TT(C/G)-3'. Cleavage occurs on the 3'-side of the TT dinucleotide at the point of strand exchange. HJ branch migration catalyzed by RuvA-RuvB allows RuvC to scan DNA until it finds its consensus sequence, where it cleaves and resolves the cruciform DNA. This Pseudomonas putida (strain GB-1) protein is Crossover junction endodeoxyribonuclease RuvC.